The chain runs to 93 residues: Cell division topological specificity factor (93 aa).

The protein belongs to the MinE family.

Prevents the cell division inhibition by proteins MinC and MinD at internal division sites while permitting inhibition at polar sites. This ensures cell division at the proper site by restricting the formation of a division septum at the midpoint of the long axis of the cell. The protein is Cell division topological specificity factor of Halorhodospira halophila (strain DSM 244 / SL1) (Ectothiorhodospira halophila (strain DSM 244 / SL1)).